A 215-amino-acid chain; its full sequence is Adenylyl-sulfate kinase (215 aa).

46 to 53 provides a ligand contact to ATP; it reads GLSGAGKS. The active-site Phosphoserine intermediate is Ser-120.

Belongs to the APS kinase family.

The catalysed reaction is adenosine 5'-phosphosulfate + ATP = 3'-phosphoadenylyl sulfate + ADP + H(+). It participates in sulfur metabolism; hydrogen sulfide biosynthesis; sulfite from sulfate: step 2/3. In terms of biological role, catalyzes the synthesis of activated sulfate. In Vibrio cholerae serotype O1 (strain ATCC 39315 / El Tor Inaba N16961), this protein is Adenylyl-sulfate kinase (cysC).